The chain runs to 147 residues: E3 ubiquitin-protein ligase RNF181 homolog (147 aa).

The RING-type; atypical zinc finger occupies 70 to 111 (CSVCKEPAEEGQKYRILPCKHEFHEECILLWLKKTNSCPLCR).

This sequence belongs to the RNF181 family.

It carries out the reaction S-ubiquitinyl-[E2 ubiquitin-conjugating enzyme]-L-cysteine + [acceptor protein]-L-lysine = [E2 ubiquitin-conjugating enzyme]-L-cysteine + N(6)-ubiquitinyl-[acceptor protein]-L-lysine.. It participates in protein modification; protein ubiquitination. E3 ubiquitin-protein ligase which accepts ubiquitin from an E2 ubiquitin-conjugating enzyme in the form of a thioester and then directly transfers the ubiquitin to targeted substrates. This is E3 ubiquitin-protein ligase RNF181 homolog from Drosophila melanogaster (Fruit fly).